The primary structure comprises 281 residues: MMPKRKFQAPTERQLAVRRDNIPDALLTRCPVCHEDCYTQDLGEFKVCPHCDYGFRLPAWQRVQQLTASFEERDADLSAPVSFDDPAYLEKLQRAKAASHLNESVLTGIGTLATYQFGLGVMETKFMMGSLGAATGEKITRLFETCTTQKLPVVMVTASGGARMQEGARALMQMAKVSTAVANHRKAGLLYITILTDPTTGGVTASFAMQGDIMLSEPRALIGFAGRRVIEQTIQQTPPADFQRAETLLANGWLDQIVPRPALRKTLQRLLTITQGGHQDV.

Positions Leu-26–Val-281 constitute a CoA carboxyltransferase N-terminal domain. Zn(2+) is bound by residues Cys-30, Cys-33, Cys-48, and Cys-51. The C4-type zinc finger occupies Cys-30–Cys-51.

This sequence belongs to the AccD/PCCB family. In terms of assembly, acetyl-CoA carboxylase is a heterohexamer composed of biotin carboxyl carrier protein (AccB), biotin carboxylase (AccC) and two subunits each of ACCase subunit alpha (AccA) and ACCase subunit beta (AccD). The cofactor is Zn(2+).

The protein resides in the cytoplasm. It catalyses the reaction N(6)-carboxybiotinyl-L-lysyl-[protein] + acetyl-CoA = N(6)-biotinyl-L-lysyl-[protein] + malonyl-CoA. It functions in the pathway lipid metabolism; malonyl-CoA biosynthesis; malonyl-CoA from acetyl-CoA: step 1/1. Functionally, component of the acetyl coenzyme A carboxylase (ACC) complex. Biotin carboxylase (BC) catalyzes the carboxylation of biotin on its carrier protein (BCCP) and then the CO(2) group is transferred by the transcarboxylase to acetyl-CoA to form malonyl-CoA. The chain is Acetyl-coenzyme A carboxylase carboxyl transferase subunit beta 2 from Lactiplantibacillus plantarum (strain JDM1) (Lactobacillus plantarum).